Here is a 129-residue protein sequence, read N- to C-terminus: Large ribosomal subunit protein bL20 (129 aa).

It belongs to the bacterial ribosomal protein bL20 family.

Its function is as follows. Binds directly to 23S ribosomal RNA and is necessary for the in vitro assembly process of the 50S ribosomal subunit. It is not involved in the protein synthesizing functions of that subunit. The polypeptide is Large ribosomal subunit protein bL20 (Mycobacterium marinum (strain ATCC BAA-535 / M)).